A 344-amino-acid polypeptide reads, in one-letter code: Phenylalanine--tRNA ligase alpha subunit (344 aa).

Glu256 contacts Mg(2+).

The protein belongs to the class-II aminoacyl-tRNA synthetase family. Phe-tRNA synthetase alpha subunit type 1 subfamily. Tetramer of two alpha and two beta subunits. It depends on Mg(2+) as a cofactor.

The protein resides in the cytoplasm. The enzyme catalyses tRNA(Phe) + L-phenylalanine + ATP = L-phenylalanyl-tRNA(Phe) + AMP + diphosphate + H(+). The chain is Phenylalanine--tRNA ligase alpha subunit (pheS) from Halalkalibacterium halodurans (strain ATCC BAA-125 / DSM 18197 / FERM 7344 / JCM 9153 / C-125) (Bacillus halodurans).